We begin with the raw amino-acid sequence, 433 residues long: E3 ubiquitin-protein ligase RGLG5 (433 aa).

A disordered region spans residues 1–61 (MGGSSSKESP…SYNSGRQTPK (61 aa)). Residue Gly2 is the site of N-myristoyl glycine attachment. The segment covering 22–39 (SVSGSSSYSSAWDQSSYY) has biased composition (low complexity). Residues 40–61 (QTPNHPSASPVSSYNSGRQTPK) are compositionally biased toward polar residues. Positions 93–313 (NLIVGIDVTK…KEAEFALSAL (221 aa)) constitute a VWFA domain. The disordered stretch occupies residues 340–383 (IALPPPTYATQSMRNSPRTSRSTSFQNKPYDNGVSSTPPSTTHN). The span at 347-383 (YATQSMRNSPRTSRSTSFQNKPYDNGVSSTPPSTTHN) shows a compositional bias: polar residues. The RING-type zinc-finger motif lies at 390-423 (CPVCLVSAKNMAFNCGHQTCAGCGEDLHVCPICR).

In terms of assembly, interacts with PP2CA. In terms of processing, N-myristoylated.

Its subcellular location is the cell membrane. The enzyme catalyses S-ubiquitinyl-[E2 ubiquitin-conjugating enzyme]-L-cysteine + [acceptor protein]-L-lysine = [E2 ubiquitin-conjugating enzyme]-L-cysteine + N(6)-ubiquitinyl-[acceptor protein]-L-lysine.. Its function is as follows. Together with RGLG1, mediates the ubiquitination and subsequent proteasomal degradation of the target protein PP2CA. Functions as a positive regulator of abscisic acid (ABA) signaling through ABA-dependent degradation of PP2CA, a major inhibitor of ABA signaling. The chain is E3 ubiquitin-protein ligase RGLG5 from Arabidopsis thaliana (Mouse-ear cress).